Consider the following 449-residue polypeptide: Cysteine--tRNA ligase (449 aa).

Position 29 (C29) interacts with Zn(2+). The 'HIGH' region signature appears at 31–41; the sequence is PTVYDHLHIGN. Residues C211, H236, and E240 each contribute to the Zn(2+) site. The 'KMSKS' region motif lies at 269-273; that stretch reads KMSKS. K272 provides a ligand contact to ATP.

The protein belongs to the class-I aminoacyl-tRNA synthetase family. In terms of assembly, monomer. Zn(2+) serves as cofactor.

It is found in the cytoplasm. It catalyses the reaction tRNA(Cys) + L-cysteine + ATP = L-cysteinyl-tRNA(Cys) + AMP + diphosphate. The chain is Cysteine--tRNA ligase from Methylocella silvestris (strain DSM 15510 / CIP 108128 / LMG 27833 / NCIMB 13906 / BL2).